The primary structure comprises 380 residues: Lipid-A-disaccharide synthase (380 aa).

This sequence belongs to the LpxB family.

It carries out the reaction a lipid X + a UDP-2-N,3-O-bis[(3R)-3-hydroxyacyl]-alpha-D-glucosamine = a lipid A disaccharide + UDP + H(+). It participates in bacterial outer membrane biogenesis; LPS lipid A biosynthesis. Functionally, condensation of UDP-2,3-diacylglucosamine and 2,3-diacylglucosamine-1-phosphate to form lipid A disaccharide, a precursor of lipid A, a phosphorylated glycolipid that anchors the lipopolysaccharide to the outer membrane of the cell. The chain is Lipid-A-disaccharide synthase from Azotobacter vinelandii (strain DJ / ATCC BAA-1303).